The chain runs to 294 residues: 4-hydroxy-tetrahydrodipicolinate synthase (294 aa).

T47 is a binding site for pyruvate. Y135 acts as the Proton donor/acceptor in catalysis. The active-site Schiff-base intermediate with substrate is K163. Pyruvate is bound at residue T205.

The protein belongs to the DapA family. As to quaternary structure, homotetramer; dimer of dimers.

The protein localises to the cytoplasm. The enzyme catalyses L-aspartate 4-semialdehyde + pyruvate = (2S,4S)-4-hydroxy-2,3,4,5-tetrahydrodipicolinate + H2O + H(+). The protein operates within amino-acid biosynthesis; L-lysine biosynthesis via DAP pathway; (S)-tetrahydrodipicolinate from L-aspartate: step 3/4. In terms of biological role, catalyzes the condensation of (S)-aspartate-beta-semialdehyde [(S)-ASA] and pyruvate to 4-hydroxy-tetrahydrodipicolinate (HTPA). The polypeptide is 4-hydroxy-tetrahydrodipicolinate synthase (Rickettsia peacockii (strain Rustic)).